Consider the following 241-residue polypeptide: Uridylate kinase (241 aa).

Lysine 15 to glycine 18 provides a ligand contact to ATP. The segment at glycine 23 to glycine 28 is involved in allosteric activation by GTP. A UMP-binding site is contributed by glycine 57. ATP is bound by residues glycine 58 and arginine 62. UMP contacts are provided by residues aspartate 77 and threonine 138–threonine 145. ATP contacts are provided by threonine 165, tyrosine 171, and aspartate 174.

The protein belongs to the UMP kinase family. Homohexamer.

The protein localises to the cytoplasm. It carries out the reaction UMP + ATP = UDP + ADP. Its pathway is pyrimidine metabolism; CTP biosynthesis via de novo pathway; UDP from UMP (UMPK route): step 1/1. With respect to regulation, allosterically activated by GTP. Inhibited by UTP. Its function is as follows. Catalyzes the reversible phosphorylation of UMP to UDP. In Shewanella amazonensis (strain ATCC BAA-1098 / SB2B), this protein is Uridylate kinase.